The chain runs to 641 residues: Chaperone protein DnaK (641 aa).

Threonine 200 is subject to Phosphothreonine; by autocatalysis. Residues 602-611 are compositionally biased toward low complexity; that stretch reads AASSKASAAS. Residues 602–641 are disordered; that stretch reads AASSKASAASSPPPPPGAGGQKSDVIDAEFEKVDKDKPQA. Over residues 630–641 the composition is skewed to basic and acidic residues; the sequence is EFEKVDKDKPQA.

The protein belongs to the heat shock protein 70 family.

In terms of biological role, acts as a chaperone. In Methylacidiphilum infernorum (isolate V4) (Methylokorus infernorum (strain V4)), this protein is Chaperone protein DnaK.